Consider the following 702-residue polypeptide: Phosphoglycerol transferase I (702 aa).

Helical transmembrane passes span 2-22 (HWML…SPRL), 71-91 (FSGY…PLLL), and 103-123 (GGAV…ASPL).

This sequence belongs to the OpgB family.

It is found in the cell inner membrane. It catalyses the reaction a phosphatidylglycerol + a membrane-derived-oligosaccharide D-glucose = a 1,2-diacyl-sn-glycerol + a membrane-derived-oligosaccharide 6-(glycerophospho)-D-glucose.. It participates in glycan metabolism; osmoregulated periplasmic glucan (OPG) biosynthesis. Functionally, transfers a phosphoglycerol residue from phosphatidylglycerol to the membrane-bound nascent glucan backbones. The chain is Phosphoglycerol transferase I from Xanthomonas euvesicatoria pv. vesicatoria (strain 85-10) (Xanthomonas campestris pv. vesicatoria).